Consider the following 306-residue polypeptide: Transcription initiation factor IIB (306 aa).

A run of 2 repeats spans residues 122-205 and 216-297.

Belongs to the TFIIB family.

Its function is as follows. Stabilizes TBP binding to an archaeal box-A promoter. Also responsible for recruiting RNA polymerase II to the pre-initiation complex (DNA-TBP-TFIIB). This Saccharolobus shibatae (strain ATCC 51178 / DSM 5389 / JCM 8931 / NBRC 15437 / B12) (Sulfolobus shibatae) protein is Transcription initiation factor IIB.